The following is a 441-amino-acid chain: Serum response factor-binding protein 1 (441 aa).

2 coiled-coil regions span residues 52–77 and 118–140; these read KGTE…AMKE and LLKK…RQSA. 3 disordered regions span residues 137 to 342, 357 to 389, and 406 to 441; these read RQSA…RNDK, FHSL…EPPV, and QTMQ…TFDD. Residues 139-152 are compositionally biased toward low complexity; that stretch reads SAPAAESSESTSGE. The segment covering 153 to 183 has biased composition (basic and acidic residues); it reads GRCKDIARSKDDARESQHPERTVVREQKAKD. A Glycyl lysine isopeptide (Lys-Gly) (interchain with G-Cter in SUMO2) cross-link involves residue Lys201. The residue at position 214 (Ser214) is a Phosphoserine. The span at 237–246 shows a compositional bias: polar residues; it reads DSNQGKASTK. The span at 269-282 shows a compositional bias: basic and acidic residues; that stretch reads EKEYFDDSTEERFY. Ser276, Ser291, and Ser293 each carry phosphoserine. Over residues 308-321 the composition is skewed to basic and acidic residues; it reads KESGVHSSAKELKP. Residue Lys328 forms a Glycyl lysine isopeptide (Lys-Gly) (interchain with G-Cter in SUMO2) linkage. Positions 366–381 are enriched in basic and acidic residues; the sequence is SRRDPREQAPKNKAPD.

Interacts with SRF. Forms complexes with SRF and SRF cofactors ARID2, MYOCD and NKX2-5. Interacts with the N-terminus of SLC2A4. Highly expressed in heart, skeletal muscle, liver, kidney, testis and brain. Also expressed in white adipose tissue. Expression is up-regulated in cardiomyopathic heart.

It localises to the cytoplasm. The protein resides in the perinuclear region. In terms of biological role, may be involved in regulating transcriptional activation of cardiac genes during the aging process. May play a role in biosynthesis and/or processing of SLC2A4 in adipose cells. The polypeptide is Serum response factor-binding protein 1 (Mus musculus (Mouse)).